Consider the following 221-residue polypeptide: PKHD-type hydroxylase Pro_1271 (221 aa).

Residues 80 to 174 (KVHGVMFSKS…RIVCVGWIQS (95 aa)) enclose the Fe2OG dioxygenase domain. Residues H98, D100, and H155 each contribute to the Fe cation site. Residue R165 participates in 2-oxoglutarate binding.

The cofactor is Fe(2+). L-ascorbate is required as a cofactor.

The polypeptide is PKHD-type hydroxylase Pro_1271 (Prochlorococcus marinus (strain SARG / CCMP1375 / SS120)).